A 60-amino-acid polypeptide reads, in one-letter code: Small integral membrane protein 3 (60 aa).

A helical transmembrane segment spans residues 20 to 40; the sequence is IWAIVLIILATVVIMTSLFLC.

It is found in the membrane. The protein is Small integral membrane protein 3 (Smim3) of Rattus norvegicus (Rat).